The chain runs to 364 residues: Dual-specificity RNA methyltransferase RlmN (364 aa).

Catalysis depends on Glu-91, which acts as the Proton acceptor. The Radical SAM core domain maps to 97-333 (ESDRGTLCIS…VTVRKTRGDD (237 aa)). A disulfide bond links Cys-104 and Cys-338. 3 residues coordinate [4Fe-4S] cluster: Cys-111, Cys-115, and Cys-118. Residues 164-165 (GE), Ser-196, 218-220 (SLH), and Asn-295 each bind S-adenosyl-L-methionine. Cys-338 acts as the S-methylcysteine intermediate in catalysis.

It belongs to the radical SAM superfamily. RlmN family. It depends on [4Fe-4S] cluster as a cofactor.

The protein resides in the cytoplasm. The catalysed reaction is adenosine(2503) in 23S rRNA + 2 reduced [2Fe-2S]-[ferredoxin] + 2 S-adenosyl-L-methionine = 2-methyladenosine(2503) in 23S rRNA + 5'-deoxyadenosine + L-methionine + 2 oxidized [2Fe-2S]-[ferredoxin] + S-adenosyl-L-homocysteine. The enzyme catalyses adenosine(37) in tRNA + 2 reduced [2Fe-2S]-[ferredoxin] + 2 S-adenosyl-L-methionine = 2-methyladenosine(37) in tRNA + 5'-deoxyadenosine + L-methionine + 2 oxidized [2Fe-2S]-[ferredoxin] + S-adenosyl-L-homocysteine. Specifically methylates position 2 of adenine 2503 in 23S rRNA and position 2 of adenine 37 in tRNAs. m2A2503 modification seems to play a crucial role in the proofreading step occurring at the peptidyl transferase center and thus would serve to optimize ribosomal fidelity. This chain is Dual-specificity RNA methyltransferase RlmN, found in Neisseria meningitidis serogroup B (strain ATCC BAA-335 / MC58).